The primary structure comprises 530 residues: Phosphoenolpyruvate carboxykinase (ATP) (530 aa).

Residues arginine 56, tyrosine 196, and lysine 202 each coordinate substrate. ATP-binding positions include lysine 202, histidine 221, and 237–245; that span reads GLSGTGKTT. Positions 202 and 221 each coordinate Mn(2+). Residue aspartate 258 coordinates Mn(2+). Residues glutamate 286, arginine 322, 438–439, and threonine 444 contribute to the ATP site; that span reads RI. Substrate is bound at residue arginine 322.

Belongs to the phosphoenolpyruvate carboxykinase (ATP) family. As to quaternary structure, monomer. Mn(2+) is required as a cofactor.

The protein localises to the cytoplasm. The enzyme catalyses oxaloacetate + ATP = phosphoenolpyruvate + ADP + CO2. It participates in carbohydrate biosynthesis; gluconeogenesis. Involved in the gluconeogenesis. Catalyzes the conversion of oxaloacetate (OAA) to phosphoenolpyruvate (PEP) through direct phosphoryl transfer between the nucleoside triphosphate and OAA. The polypeptide is Phosphoenolpyruvate carboxykinase (ATP) (Photobacterium profundum (strain SS9)).